Consider the following 138-residue polypeptide: MNIIDRFEQENISKRTANKKIPDFEAGDTVKVTVKIIDRSIEKDGKEKLTERFQAYEGVVIAKRNRGITSSFLVRKISHGEGVERRFMTYSPIVHSIDVVKYGVVCRAKLYYLRNRSGKSARIKERHIPIAKTKAAKA.

This sequence belongs to the bacterial ribosomal protein bL19 family.

Functionally, this protein is located at the 30S-50S ribosomal subunit interface and may play a role in the structure and function of the aminoacyl-tRNA binding site. The sequence is that of Large ribosomal subunit protein bL19 from Rickettsia africae (strain ESF-5).